The chain runs to 389 residues: Na(+)/H(+) antiporter NhaA (389 aa).

Helical transmembrane passes span 8–28, 48–68, 91–111, 119–139, 173–193, 214–234, 262–282, 288–308, 327–347, and 361–381; these read INFL…ALVW, ISLH…MAAI, MATL…NALI, GWGI…RVVF, NPVA…AYLL, AGLY…VPFL, WKIF…GVEF, LTWL…FLMG, LLVA…VSGV, and GALF…VLGI.

This sequence belongs to the NhaA Na(+)/H(+) (TC 2.A.33) antiporter family.

It is found in the cell membrane. It catalyses the reaction Na(+)(in) + 2 H(+)(out) = Na(+)(out) + 2 H(+)(in). In terms of biological role, na(+)/H(+) antiporter that extrudes sodium in exchange for external protons. In Desulfitobacterium hafniense (strain DSM 10664 / DCB-2), this protein is Na(+)/H(+) antiporter NhaA.